Consider the following 364-residue polypeptide: Monocarboxylate 2-oxoacid-binding periplasmic protein all3028 (364 aa).

Positions 1–26 (MKRREVLNTAAIATATTALVSCTQTN) are cleaved as a signal peptide. Residues 103-104 (YY), Gln160, and Arg181 contribute to the substrate site. Gln160 is a Na(+) binding site. Na(+) contacts are provided by Glu218, Trp219, and Glu244.

It belongs to the bacterial solute-binding protein 7 family. Homodimer. The complex comprises the extracytoplasmic solute receptor protein all3028, and the two putative transmembrane proteins alr3026 and alr3027.

It is found in the periplasm. With respect to regulation, pyruvate uptake inhibited by 2-oxobutyrate, 2-oxovalerate, 2-oxoisovalerate, 2-oxoisocaproate and 2-oxo-3-methylvalerate. Part of the tripartite ATP-independent periplasmic (TRAP) transport system involved in the uptake of monocarboxylate 2-oxoacids. This protein specifically binds monocarboxylate 2-oxoacids including pyruvate, 2-oxobutyrate, 2-oxovalerate, 2-oxoisovalerate, 2-oxoisocaproate and 2-oxo-3-methylvalerate. Is not able to bind mannitol. The chain is Monocarboxylate 2-oxoacid-binding periplasmic protein all3028 from Nostoc sp. (strain PCC 7120 / SAG 25.82 / UTEX 2576).